The primary structure comprises 585 residues: Voltage-gated potassium channel KCNC1 (585 aa).

Residues 1-190 (MGQGDESERI…EDPYSSRYAR (190 aa)) lie on the Cytoplasmic side of the membrane. Ser-44 is modified (phosphoserine). Zn(2+)-binding residues include His-77, Cys-83, Cys-104, and Cys-105. Residues 121 to 147 (SFGGAPLDNSADDADADGPGDSGDGED) form a disordered region. Phosphoserine is present on residues Ser-130, Ser-142, Ser-158, and Ser-160. Residues 130–147 (SADDADADGPGDSGDGED) are compositionally biased toward acidic residues. The chain crosses the membrane as a helical span at residues 191-209 (YVAFASLFFILVSITTFCL). N-linked (GlcNAc...) asparagine glycans are attached at residues Asn-220 and Asn-229. A helical membrane pass occupies residues 248–267 (IEGVCVVWFTFEFLMRVVFC). The Cytoplasmic segment spans residues 268 to 276 (PNKVEFIKN). The helical transmembrane segment at 277-295 (SLNIIDFVAILPFYLEVGL) threads the bilayer. A helical; Voltage-sensor transmembrane segment spans residues 309 to 331 (FLRVVRFVRILRIFKLTRHFVGL). Residues 332–344 (RVLGHTLRASTNE) lie on the Cytoplasmic side of the membrane. Residues 345–366 (FLLLIIFLALGVLIFATMIYYA) form a helical membrane-spanning segment. 4 residues coordinate K(+): Thr-400, Leu-401, Gly-402, and Tyr-403. The Selectivity filter signature appears at 400 to 405 (TLGYGD). The chain crosses the membrane as a helical span at residues 415-436 (LVGALCALAGVLTIAMPVPVIV). At 437-585 (NNFGMYYSLA…YMPTEAVRVT (149 aa)) the chain is on the cytoplasmic side. Phosphoserine is present on Ser-474. Position 483 is a phosphothreonine (Thr-483).

Belongs to the potassium channel family. C (Shaw) (TC 1.A.1.2) subfamily. Kv3.1/KCNC1 sub-subfamily. In terms of assembly, homotetramer. Homomultimer. Heteromultimer with KCNG3, KCNG4 and KCNV2. Heteromultimer with KCNC2. Heterotetramer with KCNC3. Interacts with the ancillary subunits KCNE1 and KCNE2; the interaction modulates channel activity. N-glycosylated; contains sialylated glycans. In terms of tissue distribution, expressed in brain. Expressed in globus pallidal neurons of the basal ganglia (at protein level). Detected on Purkinje cells in the cerebellum molecular layer (at protein level).

It localises to the cell membrane. The protein localises to the cell projection. The protein resides in the axon. Its subcellular location is the presynaptic cell membrane. It catalyses the reaction K(+)(in) = K(+)(out). In terms of biological role, voltage-gated potassium channel that opens in response to the voltage difference across the membrane and through which potassium ions pass in accordance with their electrochemical gradient. The mechanism is time-dependent and inactivation is slow. Plays an important role in the rapid repolarization of fast-firing brain neurons. Can form functional homotetrameric channels and heterotetrameric channels that contain variable proportions of KCNC2, and possibly other family members as well. Contributes to fire sustained trains of very brief action potentials at high frequency in pallidal neurons. The sequence is that of Voltage-gated potassium channel KCNC1 from Rattus norvegicus (Rat).